The primary structure comprises 369 residues: Phospho-N-acetylmuramoyl-pentapeptide-transferase (369 aa).

10 helical membrane passes run I2 to F22, G54 to L74, G80 to L100, F113 to V133, A158 to I178, L195 to F215, P241 to W261, I268 to L288, L293 to I313, and F347 to L367.

This sequence belongs to the glycosyltransferase 4 family. MraY subfamily. Requires Mg(2+) as cofactor.

Its subcellular location is the cell membrane. It carries out the reaction UDP-N-acetyl-alpha-D-muramoyl-L-alanyl-gamma-D-glutamyl-meso-2,6-diaminopimeloyl-D-alanyl-D-alanine + di-trans,octa-cis-undecaprenyl phosphate = di-trans,octa-cis-undecaprenyl diphospho-N-acetyl-alpha-D-muramoyl-L-alanyl-D-glutamyl-meso-2,6-diaminopimeloyl-D-alanyl-D-alanine + UMP. The protein operates within cell wall biogenesis; peptidoglycan biosynthesis. Catalyzes the initial step of the lipid cycle reactions in the biosynthesis of the cell wall peptidoglycan: transfers peptidoglycan precursor phospho-MurNAc-pentapeptide from UDP-MurNAc-pentapeptide onto the lipid carrier undecaprenyl phosphate, yielding undecaprenyl-pyrophosphoryl-MurNAc-pentapeptide, known as lipid I. In Tropheryma whipplei (strain TW08/27) (Whipple's bacillus), this protein is Phospho-N-acetylmuramoyl-pentapeptide-transferase.